Consider the following 213-residue polypeptide: Large ribosomal subunit protein uL3 (213 aa).

Glutamine 151 carries the post-translational modification N5-methylglutamine.

It belongs to the universal ribosomal protein uL3 family. As to quaternary structure, part of the 50S ribosomal subunit. Forms a cluster with proteins L14 and L19. In terms of processing, methylated by PrmB.

One of the primary rRNA binding proteins, it binds directly near the 3'-end of the 23S rRNA, where it nucleates assembly of the 50S subunit. In Rhizobium etli (strain CIAT 652), this protein is Large ribosomal subunit protein uL3.